We begin with the raw amino-acid sequence, 1361 residues long: DNA-directed RNA polymerase subunit beta' (1361 aa).

Residues Cys69, Cys71, Cys84, and Cys87 each contribute to the Zn(2+) site. Mg(2+) is bound by residues Asp460, Asp462, and Asp464. Residues Cys808, Cys882, Cys889, and Cys892 each contribute to the Zn(2+) site.

The protein belongs to the RNA polymerase beta' chain family. As to quaternary structure, the RNAP catalytic core consists of 2 alpha, 1 beta, 1 beta' and 1 omega subunit. When a sigma factor is associated with the core the holoenzyme is formed, which can initiate transcription. Mg(2+) serves as cofactor. The cofactor is Zn(2+).

The catalysed reaction is RNA(n) + a ribonucleoside 5'-triphosphate = RNA(n+1) + diphosphate. DNA-dependent RNA polymerase catalyzes the transcription of DNA into RNA using the four ribonucleoside triphosphates as substrates. The chain is DNA-directed RNA polymerase subunit beta' from Rickettsia bellii (strain RML369-C).